A 123-amino-acid chain; its full sequence is TYMS opposite strand protein (123 aa).

The interval 57 to 111 (MRPLPRRIEVRTKRGPQRPAAPERSPQPRLPPSRHPSRRGPRRHLSGCSAPACRI) is disordered. A compositionally biased stretch (basic residues) spans 91 to 101 (HPSRRGPRRHL).

The polypeptide is TYMS opposite strand protein (TYMSOS) (Homo sapiens (Human)).